The chain runs to 127 residues: Small ribosomal subunit protein uS13 (127 aa).

Residues arginine 99–lysine 127 are disordered.

It belongs to the universal ribosomal protein uS13 family. In terms of assembly, part of the 30S ribosomal subunit. Forms a loose heterodimer with protein S19. Forms two bridges to the 50S subunit in the 70S ribosome.

Functionally, located at the top of the head of the 30S subunit, it contacts several helices of the 16S rRNA. In the 70S ribosome it contacts the 23S rRNA (bridge B1a) and protein L5 of the 50S subunit (bridge B1b), connecting the 2 subunits; these bridges are implicated in subunit movement. Contacts the tRNAs in the A and P-sites. The protein is Small ribosomal subunit protein uS13 of Roseiflexus castenholzii (strain DSM 13941 / HLO8).